The primary structure comprises 236 residues: ATP synthase subunit a (236 aa).

A run of 5 helical transmembrane segments spans residues 17 to 37 (LANV…AVLA), 80 to 100 (MTLI…SVVI), 114 to 134 (VVTL…GIKL), 179 to 199 (ILLA…IAAI), and 208 to 228 (FSIF…MVYM).

Belongs to the ATPase A chain family. As to quaternary structure, F-type ATPases have 2 components, CF(1) - the catalytic core - and CF(0) - the membrane proton channel. CF(1) has five subunits: alpha(3), beta(3), gamma(1), delta(1), epsilon(1). CF(0) has three main subunits: a(1), b(2) and c(9-12). The alpha and beta chains form an alternating ring which encloses part of the gamma chain. CF(1) is attached to CF(0) by a central stalk formed by the gamma and epsilon chains, while a peripheral stalk is formed by the delta and b chains.

It localises to the cell membrane. Its function is as follows. Key component of the proton channel; it plays a direct role in the translocation of protons across the membrane. The sequence is that of ATP synthase subunit a from Anoxybacillus flavithermus (strain DSM 21510 / WK1).